The chain runs to 261 residues: NAD-capped RNA hydrolase NudC (261 aa).

R74 contributes to the substrate binding site. 4 residues coordinate Zn(2+): C103, C106, C121, and C124. Y129 contributes to the substrate binding site. Residues 130–253 (PRIFPCIIVA…TIARALIEQT (124 aa)) enclose the Nudix hydrolase domain. A divalent metal cation is bound by residues A163, E179, and E183. The Nudix box motif lies at 164-185 (GFVEVGETLEQCVAREVKEETG). 197–204 (QPWAFPSS) contributes to the substrate binding site. E224 contributes to the a divalent metal cation binding site. A246 is a substrate binding site.

This sequence belongs to the Nudix hydrolase family. NudC subfamily. Homodimer. Mg(2+) is required as a cofactor. The cofactor is Mn(2+). It depends on Zn(2+) as a cofactor.

It carries out the reaction a 5'-end NAD(+)-phospho-ribonucleoside in mRNA + H2O = a 5'-end phospho-adenosine-phospho-ribonucleoside in mRNA + beta-nicotinamide D-ribonucleotide + 2 H(+). The enzyme catalyses NAD(+) + H2O = beta-nicotinamide D-ribonucleotide + AMP + 2 H(+). It catalyses the reaction NADH + H2O = reduced beta-nicotinamide D-ribonucleotide + AMP + 2 H(+). Functionally, mRNA decapping enzyme that specifically removes the nicotinamide adenine dinucleotide (NAD) cap from a subset of mRNAs by hydrolyzing the diphosphate linkage to produce nicotinamide mononucleotide (NMN) and 5' monophosphate mRNA. The NAD-cap is present at the 5'-end of some mRNAs and stabilizes RNA against 5'-processing. Has preference for mRNAs with a 5'-end purine. Catalyzes the hydrolysis of a broad range of dinucleotide pyrophosphates. The chain is NAD-capped RNA hydrolase NudC from Vibrio vulnificus (strain CMCP6).